Here is a 210-residue protein sequence, read N- to C-terminus: Large ribosomal subunit protein bL25 (210 aa).

The interval 179 to 210 (LPPQQEEEIHSGEQQEPGQPEAEEGRETTPEG) is disordered. Residues 201-210 (EEGRETTPEG) show a composition bias toward basic and acidic residues.

It belongs to the bacterial ribosomal protein bL25 family. CTC subfamily. As to quaternary structure, part of the 50S ribosomal subunit; part of the 5S rRNA/L5/L18/L25 subcomplex. Contacts the 5S rRNA. Binds to the 5S rRNA independently of L5 and L18.

Its function is as follows. This is one of the proteins that binds to the 5S RNA in the ribosome where it forms part of the central protuberance. The sequence is that of Large ribosomal subunit protein bL25 from Geobacillus thermodenitrificans (strain NG80-2).